The following is a 265-amino-acid chain: MAAFRMGKLTTIPAGLIYASINVRLAKEEEPKKQLVRPDQLPIYTAPPLHSKYVEEQPGNLQRGFASIRTTTVYYIGWCKSIYLFMKNGVMDTVQFGKDAYVYLKNPPQDFLPKMGVITASGLAGLLSARKGSRFKKIAYPLGLATLGATVCYPAQSVIIAKITGKKAYATSQQIFQAIKSLWTQKSENESLPEPKEESKEGRSDEIHASLPDLKHSVSLPKELASATVIKSESTSGTTQFIPDPKLMDHGQSHPDDKDMYSTRS.

Residues methionine 1 to lysine 27 constitute a mitochondrion transit peptide. Over glutamate 28–aspartate 110 the chain is Mitochondrial intermembrane. The helical transmembrane segment at phenylalanine 111 to alanine 129 threads the bilayer. The Mitochondrial matrix portion of the chain corresponds to arginine 130–lysine 137. A helical membrane pass occupies residues isoleucine 138–alanine 155. The Mitochondrial intermembrane segment spans residues glutamine 156–serine 265. Disordered stretches follow at residues serine 187–lysine 215 and valine 229–serine 265. The residue at position 204 (serine 204) is a Phosphoserine. A compositionally biased stretch (polar residues) spans valine 229 to phenylalanine 241. Basic and acidic residues predominate over residues lysine 246–serine 265.

It belongs to the apolipoprotein O/MICOS complex subunit Mic27 family. As to quaternary structure, component of the mitochondrial contact site and cristae organizing system (MICOS) complex, composed of at least MICOS10/MIC10, CHCHD3/MIC19, CHCHD6/MIC25, APOOL/MIC27, IMMT/MIC60, APOO/MIC23/MIC26 and MICOS13/MIC13. This complex was also known under the names MINOS or MitOS complex. The MICOS complex associates with mitochondrial outer membrane proteins SAMM50, MTX1 and MTX2 (together described as components of the mitochondrial outer membrane sorting assembly machinery (SAM) complex) and DNAJC11, mitochondrial inner membrane protein TMEM11 and with HSPA9. The MICOS and SAM complexes together with DNAJC11 are part of a large protein complex spanning both membranes termed the mitochondrial intermembrane space bridging (MIB) complex. Interacts with MICOS10/MIC10, IMMT/MIC60 and APOO/MIC23/MIC26.

The protein localises to the mitochondrion inner membrane. The protein resides in the mitochondrion. In terms of biological role, component of the MICOS complex, a large protein complex of the mitochondrial inner membrane that plays crucial roles in the maintenance of crista junctions, inner membrane architecture, and formation of contact sites to the outer membrane. Specifically binds to cardiolipin (in vitro) but not to the precursor lipid phosphatidylglycerol. Plays a crucial role in crista junction formation and mitochondrial function. This Mus musculus (Mouse) protein is MICOS complex subunit Mic27 (Apool).